The following is a 487-amino-acid chain: MHNENQTLIFEISKEGRVGYSLEALDVPEVDLADVLPANLVRSEAAELPEVSELDIMRHYTALSRRNHGVDSGFYPLGSCTMKYNPKINEAVARFSGFANVHPLQDESTAQGAMELLYDLQTSLVEITGMDEVTLQPAAGAHGEWTALMMIRAFHEANGEGHRNKVIVPDSAHGTNPASATVAGFETITVKSDDNGLVDIEDLRKVVGADTAALMLTNPNTLGLFEENIIEMAELIHSVGGKVYYDGANLNAVMSKARPGDMGFDCVHLNLHKTFTGPHGGGGPGSGPVGVKADLIPFLPKPVLVRTEEGAYHFDYNRPQSIGRVKPYYGNFGINVRAYTYIRTMGPDGLKAVTEYAVLNANYMMRRLEPFYDLPYNRHCKHEFVLSGHRQKKLGVRTLDIAKRLLDFGYHPPTTYFPLNVEEALMIEPTETESKETLDAFCDVMIQIAKEAEENPSIVQEAPHTTVVSRLDETRAARTPVLRYQKA.

K273 bears the N6-(pyridoxal phosphate)lysine mark.

It belongs to the GcvP family. C-terminal subunit subfamily. In terms of assembly, the glycine cleavage system is composed of four proteins: P, T, L and H. In this organism, the P 'protein' is a heterodimer of two subunits. Pyridoxal 5'-phosphate serves as cofactor.

It carries out the reaction N(6)-[(R)-lipoyl]-L-lysyl-[glycine-cleavage complex H protein] + glycine + H(+) = N(6)-[(R)-S(8)-aminomethyldihydrolipoyl]-L-lysyl-[glycine-cleavage complex H protein] + CO2. Functionally, the glycine cleavage system catalyzes the degradation of glycine. The P protein binds the alpha-amino group of glycine through its pyridoxal phosphate cofactor; CO(2) is released and the remaining methylamine moiety is then transferred to the lipoamide cofactor of the H protein. In Lysinibacillus sphaericus (strain C3-41), this protein is Probable glycine dehydrogenase (decarboxylating) subunit 2.